The following is a 1734-amino-acid chain: Complement C4-A (1734 aa).

The signal sequence occupies residues 1 to 19 (MRLLWGLAWVFSFCASSLQ). A disulfide bond links Cys-66 and Cys-95. Asn-224 carries N-linked (GlcNAc...) asparagine glycosylation. Cys-633 and Cys-667 are oxidised to a cystine. The propeptide occupies 674–677 (RQKR). Disulfide bonds link Cys-700–Cys-726, Cys-701–Cys-733, and Cys-714–Cys-734. The Anaphylatoxin-like domain occupies 700-734 (CCQDGMTKLPMKRTCEQRAARVPQQACREPFLSCC). N-linked (GlcNAc...) asparagine glycosylation is found at Asn-743 and Asn-859. Residues 1002-1005 (CAEQ) constitute a cross-link (isoglutamyl cysteine thioester (Cys-Gln)). 2 N-linked (GlcNAc...) asparagine glycosylation sites follow: Asn-1128 and Asn-1383. Tyr-1409 is modified (sulfotyrosine). Positions 1437–1443 (RRSRRRR) are excised as a propeptide. Intrachain disulfides connect Cys-1461–Cys-1525, Cys-1573–Cys-1578, Cys-1585–Cys-1663, Cys-1608–Cys-1732, and Cys-1708–Cys-1717. The region spanning 1585-1732 (CPRLLRSLER…FLMEFSSRGC (148 aa)) is the NTR domain.

In terms of assembly, in absence of complement activation, circulates in blood as a disulfide-linked trimer of an alpha, beta and gamma chain. As to quaternary structure, complement C4b is composed of Complement C4b-A, Complement C4 beta and Complement C4 gamma chains that are associated via disulfide bonds. Non-enzymatic component of the C3 convertase, also named C4bC2b, composed of the serine protease complement C2b (C2), as well as complement C4b. Non-enzymatic component of the C5 convertase, also named C4bC2bC3b, composed of the serine protease complement C2b (C2), complement C3b, as well as complement C4b. Prior to secretion, the single-chain precursor is enzymatically cleaved by plasminogen (PLG) to yield non-identical chains alpha, beta and gamma. During activation of the complement systems, the alpha chain is cleaved into C4a and C4b by different proteases depending on the complement pathway: C4b stays linked to the beta and gamma chains, while C4a is released in the plasma. The alpha chain is cleaved by C1S to generate C4a and C4b following activation by the classical complement system. The alpha chain is cleaved to generate C4a and C4b by MASP2 following activation by the lectin complement system. The alpha chain is cleaved by GZMK to generate C4a and C4b following activation by the GZMK complement system. Further degradation of C4b by C1 into the inactive fragments C4c and C4d blocks the generation of C3 convertase. The proteolytic cleavages often are incomplete so that many structural forms can be found in plasma. In terms of processing, upon activation, the internal thioester bond reacts with carbohydrate antigens on the target surface to form amide or ester bonds, leading to covalent association with the surface of pathogens. Post-translationally, complement C4b interacts with complement C3b via a thioester linkage. N- and O-glycosylated. O-glycosylated with a core 1 or possibly core 8 glycan.

It localises to the secreted. The protein resides in the synapse. It is found in the cell projection. The protein localises to the axon. Its subcellular location is the dendrite. It localises to the cell surface. With respect to regulation, specifically inhibited by nanobody hC4Nb8, inhibiting the classical complement pathway. Precursor of non-enzymatic components of the classical, lectin and GZMK complement pathways, which consist in a cascade of proteins that leads to phagocytosis and breakdown of pathogens and signaling that strengthens the adaptive immune system. Its function is as follows. Non-enzymatic component of C3 and C5 convertases. Generated following cleavage by complement proteases (C1S, MASP2 or GZMK, depending on the complement pathway), it covalently attaches to the surface of pathogens, where it acts as an opsonin that marks the surface of antigens for removal. It then recruits the serine protease complement C2b to form the C3 and C5 convertases, which cleave and activate C3 and C5, respectively, the next components of the complement pathways. Complement C4b-A isotype is responsible for effective binding to form amide bonds with immune aggregates or protein antigens, while complement C4b-B isotype catalyzes the transacylation of the thioester carbonyl group to form ester bonds with carbohydrate antigens. Functionally, putative humoral mediator released following cleavage by complement proteases (C1S, MASP2 or GZMK, depending on the complement pathway). While it is strongly similar to anaphylatoxins, its role is unclear. Was reported to act as a mediator of local inflammatory process; however these effects were probably due to contamination with C3a and/C5a anaphylatoxins in biological assays. The protein is Complement C4-A of Mus musculus (Mouse).